The sequence spans 345 residues: Fructose-bisphosphate aldolase (345 aa).

Residue Ser53 participates in D-glyceraldehyde 3-phosphate binding. Asp95 acts as the Proton donor in catalysis. Zn(2+)-binding residues include His96, Asp131, Glu161, and His212. A dihydroxyacetone phosphate-binding site is contributed by Gly213. His252 is a Zn(2+) binding site. Dihydroxyacetone phosphate contacts are provided by residues 253-255 (GGS) and 274-277 (NVDT).

It belongs to the class II fructose-bisphosphate aldolase family. Requires Zn(2+) as cofactor.

It catalyses the reaction beta-D-fructose 1,6-bisphosphate = D-glyceraldehyde 3-phosphate + dihydroxyacetone phosphate. Its pathway is carbohydrate degradation; glycolysis; D-glyceraldehyde 3-phosphate and glycerone phosphate from D-glucose: step 4/4. Functionally, catalyzes the aldol condensation of dihydroxyacetone phosphate (DHAP or glycerone-phosphate) with glyceraldehyde 3-phosphate (G3P) to form fructose 1,6-bisphosphate (FBP) in gluconeogenesis and the reverse reaction in glycolysis. This is Fructose-bisphosphate aldolase (fba) from Mycobacterium leprae (strain TN).